The sequence spans 185 residues: Avirulence protein ATR39-1 (185 aa).

The first 20 residues, 1-20 (MVKCTPLLALTVIVSAGSDA), serve as a signal peptide directing secretion. A RxLR-dEER motif is present at residues 49 to 66 (RVLRASDVPDEVAAGESR).

Belongs to the RxLR effector family.

The protein localises to the secreted. It is found in the host cell. In terms of biological role, secreted effector that acts as an elicitor of hypersensitive response (HR) specifically on plants carrying defense protein RPP39. The allele ATR39-1 is recognized by RPP39, whereas the ATR39-2 allele is not recognized. The chain is Avirulence protein ATR39-1 from Hyaloperonospora arabidopsidis (strain Emoy2) (Downy mildew agent).